A 158-amino-acid polypeptide reads, in one-letter code: Na(+)/H(+) antiporter subunit E (158 aa).

The next 2 helical transmembrane spans lie at 22-41 (YTAV…LFVL) and 54-76 (IWAI…IDVI).

It belongs to the CPA3 antiporters (TC 2.A.63) subunit E family. As to quaternary structure, forms a heterooligomeric complex that consists of seven subunits: MrpA, MrpB, MrpC, MrpD, MrpE, MrpF and MrpG.

The protein localises to the cell membrane. Its function is as follows. Mnh complex is a Na(+)Li(+)/H(+) antiporter involved in Na(+) and/or Li(+) excretion and Na(+) resistance. Na(+)/H(+) antiport consumes a transmembrane electrical potential, and is thus inferred to be electrogenic. Does not transport K(+), Ca(2+) or Mg(2+). Mrp complex is a Na(+)/H(+) antiporter involved in Na(+) excretion and Na(+) resistance. This is Na(+)/H(+) antiporter subunit E (mrpE) from Alkalihalophilus pseudofirmus (strain ATCC BAA-2126 / JCM 17055 / OF4) (Bacillus pseudofirmus).